The chain runs to 465 residues: Cysteine--tRNA ligase (465 aa).

Cys27 is a binding site for Zn(2+). The short motif at 29–39 (PTVYNFFHIGN) is the 'HIGH' region element. Zn(2+) contacts are provided by Cys207, His232, and Glu236. A 'KMSKS' region motif is present at residues 264–268 (KMSKS). Lys267 provides a ligand contact to ATP.

It belongs to the class-I aminoacyl-tRNA synthetase family. As to quaternary structure, monomer. It depends on Zn(2+) as a cofactor.

It is found in the cytoplasm. It catalyses the reaction tRNA(Cys) + L-cysteine + ATP = L-cysteinyl-tRNA(Cys) + AMP + diphosphate. The protein is Cysteine--tRNA ligase of Clostridium botulinum (strain ATCC 19397 / Type A).